The sequence spans 200 residues: Dephospho-CoA kinase (200 aa).

Positions 4-200 (VIGLTGGIAS…VILKNWNIID (197 aa)) constitute a DPCK domain. Position 12 to 17 (12 to 17 (ASGKST)) interacts with ATP.

It belongs to the CoaE family.

Its subcellular location is the cytoplasm. The catalysed reaction is 3'-dephospho-CoA + ATP = ADP + CoA + H(+). Its pathway is cofactor biosynthesis; coenzyme A biosynthesis; CoA from (R)-pantothenate: step 5/5. Its function is as follows. Catalyzes the phosphorylation of the 3'-hydroxyl group of dephosphocoenzyme A to form coenzyme A. The protein is Dephospho-CoA kinase of Bacillus cereus (strain ATCC 10987 / NRS 248).